The primary structure comprises 224 residues: Pyridoxine/pyridoxamine 5'-phosphate oxidase (224 aa).

Residues 19 to 22 and Lys-81 each bind substrate; that span reads RGEY. Residues 76–81, 91–92, Lys-98, and Gln-120 each bind FMN; these read RSVLCK and FT. Substrate-binding residues include Tyr-138 and Arg-142. Residues 155–156 and Trp-201 each bind FMN; that span reads QS. 207–209 lines the substrate pocket; it reads RMH. Arg-211 is an FMN binding site.

This sequence belongs to the pyridoxamine 5'-phosphate oxidase family. In terms of assembly, homodimer. FMN serves as cofactor.

It catalyses the reaction pyridoxamine 5'-phosphate + O2 + H2O = pyridoxal 5'-phosphate + H2O2 + NH4(+). It carries out the reaction pyridoxine 5'-phosphate + O2 = pyridoxal 5'-phosphate + H2O2. The protein operates within cofactor metabolism; pyridoxal 5'-phosphate salvage; pyridoxal 5'-phosphate from pyridoxamine 5'-phosphate: step 1/1. Its pathway is cofactor metabolism; pyridoxal 5'-phosphate salvage; pyridoxal 5'-phosphate from pyridoxine 5'-phosphate: step 1/1. Catalyzes the oxidation of either pyridoxine 5'-phosphate (PNP) or pyridoxamine 5'-phosphate (PMP) into pyridoxal 5'-phosphate (PLP). This Mycobacterium bovis (strain ATCC BAA-935 / AF2122/97) protein is Pyridoxine/pyridoxamine 5'-phosphate oxidase.